We begin with the raw amino-acid sequence, 433 residues long: UDP-N-acetylmuramoylalanine--D-glutamate ligase (433 aa).

125 to 131 (GTSGKTT) contacts ATP.

Belongs to the MurCDEF family.

The protein localises to the cytoplasm. It carries out the reaction UDP-N-acetyl-alpha-D-muramoyl-L-alanine + D-glutamate + ATP = UDP-N-acetyl-alpha-D-muramoyl-L-alanyl-D-glutamate + ADP + phosphate + H(+). It participates in cell wall biogenesis; peptidoglycan biosynthesis. Cell wall formation. Catalyzes the addition of glutamate to the nucleotide precursor UDP-N-acetylmuramoyl-L-alanine (UMA). The protein is UDP-N-acetylmuramoylalanine--D-glutamate ligase of Nitratidesulfovibrio vulgaris (strain ATCC 29579 / DSM 644 / CCUG 34227 / NCIMB 8303 / VKM B-1760 / Hildenborough) (Desulfovibrio vulgaris).